The following is a 544-amino-acid chain: Prolyl 4-hydroxylase subunit alpha-3 (544 aa).

An N-terminal signal peptide occupies residues 1–24; the sequence is MGPGARLAALLVLLKLGVGDPAAA. The stretch at 227–260 is one TPR repeat; the sequence is EDALDYLAFACYQVGNVSCALSLSREFLVYSPDN. Residue asparagine 242 is glycosylated (N-linked (GlcNAc...) asparagine). The region spanning 422–529 is the Fe2OG dioxygenase domain; that stretch reads YAEYLQVVNY…KWVANKWIHE (108 aa). Residues histidine 440 and aspartate 442 each contribute to the Fe cation site. The N-linked (GlcNAc...) asparagine glycan is linked to asparagine 482. Residue histidine 510 coordinates Fe cation. Lysine 520 serves as a coordination point for 2-oxoglutarate.

Belongs to the P4HA family. In terms of assembly, heterotetramer of two alpha-3 chains and two beta chains (the beta chain is the multi-functional PDI). The cofactor is Fe(2+). It depends on L-ascorbate as a cofactor. Post-translationally, N-glycosylation plays no role in the catalytic activity.

It localises to the endoplasmic reticulum lumen. It catalyses the reaction L-prolyl-[collagen] + 2-oxoglutarate + O2 = trans-4-hydroxy-L-prolyl-[collagen] + succinate + CO2. Functionally, catalyzes the post-translational formation of 4-hydroxyproline in -Xaa-Pro-Gly- sequences in collagens and other proteins. This Rattus norvegicus (Rat) protein is Prolyl 4-hydroxylase subunit alpha-3 (P4ha3).